Consider the following 374-residue polypeptide: Putative phosphoserine aminotransferase (374 aa).

An L-glutamate-binding site is contributed by R48. Pyridoxal 5'-phosphate-binding positions include 82 to 83 (AT), F106, T152, D174, and Q197. Residue K198 is modified to N6-(pyridoxal phosphate)lysine. A pyridoxal 5'-phosphate-binding site is contributed by 249-250 (NT).

This sequence belongs to the class-V pyridoxal-phosphate-dependent aminotransferase family. SerC subfamily. Homodimer. Pyridoxal 5'-phosphate serves as cofactor.

The protein localises to the cytoplasm. It catalyses the reaction O-phospho-L-serine + 2-oxoglutarate = 3-phosphooxypyruvate + L-glutamate. It carries out the reaction 4-(phosphooxy)-L-threonine + 2-oxoglutarate = (R)-3-hydroxy-2-oxo-4-phosphooxybutanoate + L-glutamate. It participates in amino-acid biosynthesis; L-serine biosynthesis; L-serine from 3-phospho-D-glycerate: step 2/3. The protein operates within cofactor biosynthesis; pyridoxine 5'-phosphate biosynthesis; pyridoxine 5'-phosphate from D-erythrose 4-phosphate: step 3/5. Functionally, catalyzes the reversible conversion of 3-phosphohydroxypyruvate to phosphoserine and of 3-hydroxy-2-oxo-4-phosphonooxybutanoate to phosphohydroxythreonine. The sequence is that of Putative phosphoserine aminotransferase from Mycobacterium avium (strain 104).